The sequence spans 413 residues: MATLTQKQNAPKKVFAFRWSGVNRKGQKVSGELQADSINTVKAELRKQGVNVTKVSKKSQGLFSKGGAKIKPMDIAIVSRQITTMLSAGVPLVQSLQIIARSHEKASMRELMGQIAADVETGTPMSEALRRHPRHFDALYCDLVEAGEQSGALETIYDRIATYREKSEALKSKIKKAMFYPAMVILVAIVVTSILLLFVIPQFEDIFKSFGAELPIFTQFVIGISRFMQHWWYVIFGGTAFAIFLYVRAWRASQKVKDNTDKFILTIPVVGMILHKAAMARFARTLSTTFSAGIPLVDALISAAGASGNYVYRTAVMAIRNEVVAGMQINVAMRTVDLFPDMVIQMVMIGEESGAIDDMLSKVATIFEQEVDDLVDGLTSLLEPLIMVVLGVLVGGMVVAMYLPIFKLGDLVG.

The next 4 helical transmembrane spans lie at 180 to 200 (YPAM…LFVI), 227 to 247 (FMQH…FLYV), 286 to 306 (LSTT…AAGA), and 386 to 406 (IMVV…LPIF).

Belongs to the GSP F family.

Its subcellular location is the cell inner membrane. Functionally, involved in the translocation of the type IV pilin. The chain is Type IV pilus assembly protein TapC (tapC) from Aeromonas hydrophila.